We begin with the raw amino-acid sequence, 467 residues long: Phytase A (467 aa).

The N-terminal stretch at 1–23 (MGVSAVLLPLYLLAGVTSGLAVP) is a signal peptide. N27 is a glycosylation site (N-linked (GlcNAc...) asparagine). C31 and C40 form a disulfide bridge. 1D-myo-inositol hexakisphosphate is bound by residues Q50 and Y51. N-linked (GlcNAc...) asparagine glycosylation is present at N59. Cystine bridges form between C71–C414, C215–C465, C264–C282, and C436–C444. Residues R81, H82, R85, and T88 each contribute to the 1D-myo-inositol hexakisphosphate site. H82 serves as the catalytic Nucleophile. N-linked (GlcNAc...) asparagine glycans are attached at residues N105 and N120. R165 serves as a coordination point for 1D-myo-inositol hexakisphosphate. N207 and N230 each carry an N-linked (GlcNAc...) asparagine glycan. A 1D-myo-inositol hexakisphosphate-binding site is contributed by K301. 2 N-linked (GlcNAc...) asparagine glycosylation sites follow: N339 and N352. Residues H361 and D362 each coordinate 1D-myo-inositol hexakisphosphate. N376 and N388 each carry an N-linked (GlcNAc...) asparagine glycan.

Belongs to the histidine acid phosphatase family. As to quaternary structure, monomer.

It localises to the secreted. The catalysed reaction is 1D-myo-inositol hexakisphosphate + H2O = 1D-myo-inositol 1,2,4,5,6-pentakisphosphate + phosphate. It catalyses the reaction 1D-myo-inositol 1,2,4,5,6-pentakisphosphate + H2O = 1D-myo-inositol 1,2,5,6-tetrakisphosphate + phosphate. It carries out the reaction 1D-myo-inositol 1,2,5,6-tetrakisphosphate + H2O = 1D-myo-inositol 1,2,6-trisphosphate + phosphate. The enzyme catalyses 1D-myo-inositol 1,2,6-trisphosphate + H2O = 1D-myo-inositol 1,2-bisphosphate + phosphate. The catalysed reaction is 1D-myo-inositol 1,2-bisphosphate + H2O = 1D-myo-inositol 2-phosphate + phosphate. Its function is as follows. Catalyzes the phosphate monoester hydrolysis of phytic acid (myo-inositol hexakisphosphate), which results in the stepwise formation of myo-inositol pentakis-, tetrakis-, tris-, bis-, and monophosphates, as well as the liberation of inorganic phosphate. Myo-inositol 2-monophosphate is the end product. In Aspergillus awamori (Black koji mold), this protein is Phytase A (phyA).